Here is a 261-residue protein sequence, read N- to C-terminus: Tryptophan synthase alpha chain (261 aa).

Active-site proton acceptor residues include E49 and D60.

The protein belongs to the TrpA family. Tetramer of two alpha and two beta chains.

The enzyme catalyses (1S,2R)-1-C-(indol-3-yl)glycerol 3-phosphate + L-serine = D-glyceraldehyde 3-phosphate + L-tryptophan + H2O. It participates in amino-acid biosynthesis; L-tryptophan biosynthesis; L-tryptophan from chorismate: step 5/5. The alpha subunit is responsible for the aldol cleavage of indoleglycerol phosphate to indole and glyceraldehyde 3-phosphate. The polypeptide is Tryptophan synthase alpha chain (Roseiflexus castenholzii (strain DSM 13941 / HLO8)).